We begin with the raw amino-acid sequence, 1410 residues long: Ribosome-binding protein 1 (1410 aa).

At 1–7 the chain is on the lumenal side; sequence MDIYDTQ. A helical transmembrane segment spans residues 8–28; it reads TLGVVVFGGFMVVSAIGIFLV. Residues 29-1410 lie on the Cytoplasmic side of the membrane; the sequence is STFSMKETSY…GSSSKEGTSV (1382 aa). Disordered stretches follow at residues 44–90 and 129–152; these read NQRK…DPAP and QEKLASSPKDKKKKEKKVAKVEPA. Residues 52-63 show a composition bias toward basic residues; the sequence is THHQKVEKKKKE. A compositionally biased stretch (basic and acidic residues) spans 64 to 88; it reads KTVEKKGKTKKKEEKPNGKIPDHDP. A Glycyl lysine isopeptide (Lys-Gly) (interchain with G-Cter in SUMO2) cross-link involves residue Lys-148. 2 positions are modified to phosphoserine: Ser-159 and Ser-165. 2 disordered regions span residues 173-648 and 895-925; these read APKE…PLYL and QSSHASLRADAEKAQEQQQQMAELHSKLQSS. Composition is skewed to polar residues over residues 191 to 209 and 225 to 238; these read TPATGTTQGKKAEGTQNQS and TPNQGKKTEGTPNQ. 33 repeat units span residues 197–206, 207–216, 217–226, 227–236, 237–246, 247–256, 257–266, 267–276, 277–286, 287–296, 297–306, 307–316, 317–326, 327–336, 337–346, 347–356, 357–366, 367–376, 377–386, 387–396, 397–406, 407–416, 417–426, 427–436, 437–446, 447–456, 457–466, 467–476, 477–486, 487–496, 497–506, 507–516, and 517–526. Positions 197 to 604 are 41 X 10 AA approximate tandem repeats of [TN]-Q-[GSA]-[KRQT]-K-[ATGSV]-[ED]-[GTAS]-[ATIS]-[PQTAS]; sequence TQGKKAEGTQ…NQGKKTESAS (408 aa). A phosphothreonine mark is found at Thr-225, Thr-235, Thr-245, and Thr-255. Polar residues-rich tracts occupy residues 265–278 and 295–519; these read AQNQGKKVDTTPNQ and AQNQ…QNQG. Residues 520-532 show a composition bias toward basic and acidic residues; that stretch reads KKTEGAQGKKAER. The stretch at 527–534 is one 34; approximate repeat; sequence GKKAERSP. A Phosphoserine modification is found at Ser-533. Repeat unit 35 spans residues 535-544; sequence NQGKKGEGAP. The 36; approximate repeat unit spans residues 545-554; the sequence is IQGKKADSVA. Positions 553 to 567 are enriched in polar residues; it reads VANQGTKVEGITNQG. 2 repeat units span residues 555 to 564 and 565 to 574. The span at 568-581 shows a compositional bias: basic and acidic residues; it reads KKAEGSPSEGKKAE. Residues Ser-573 and Ser-583 each carry the phosphoserine modification. The stretch at 575-584 is one 39; approximate repeat; the sequence is SEGKKAEGSP. Tandem repeats lie at residues 585 to 594 and 595 to 604. The segment covering 602–612 has biased composition (polar residues); the sequence is SASVQGRNTDV. Ser-615 carries the phosphoserine modification. Lys-620 is covalently cross-linked (Glycyl lysine isopeptide (Lys-Gly) (interchain with G-Cter in SUMO1)). Ser-900 carries the post-translational modification Phosphoserine. Lys-932 is subject to N6-acetyllysine. 2 positions are modified to phosphoserine: Ser-959 and Ser-978. Disordered regions lie at residues 1093–1122, 1260–1287, 1330–1362, and 1378–1410; these read GPTLLKHPPAPAEPSSDLASKLREAEETQS, EMKSHVEDGDIAGAPASSPEAPPAEQDP, EKLRTAGPLESSETEEASQLKERLEKEKKLTSD, and QEQLAREKDTVKKLQEQLEKAEDGSSSKEGTSV. 2 positions are modified to phosphoserine: Ser-1276 and Ser-1277. Composition is skewed to basic and acidic residues over residues 1347–1360 and 1381–1403; these read SQLKERLEKEKKLT and LAREKDTVKKLQEQLEKAEDGSS.

The protein resides in the endoplasmic reticulum membrane. Acts as a ribosome receptor and mediates interaction between the ribosome and the endoplasmic reticulum membrane. This chain is Ribosome-binding protein 1 (RRBP1), found in Homo sapiens (Human).